The primary structure comprises 352 residues: MFEKSTWIRLPRSVVVGHGVLDRTAEAVEELYLDGRPLIVTSPTPEELAVDRLREQFVSAGFDPAVAVVEEASFDAVERVIETAERETAGFLVGFGGGKPIDIAKMAADERNCGFISVPTAASHDGIVSGRGSVPEGDTRHSVAAHPPLAVIADTELIANSPWRLTTAGCADIISNYTAVKDWQLAHRLKNVEYSEYAGALSQMTAEMLVDNSASIKRGLEESAWIVVKALVSSGVAMSIAGSSRPASGAEHLISHQLDRIAPETALHGHQVGVASIVTEYLHSGEGGDWRRVRDALASIDAPTTAAELGIDGERFIEATTSAHEIRDRYTILGDGIEREAAIEAAATTGVL.

Residues 98–102 (GKPID) and 120–123 (TAAS) contribute to the NAD(+) site. Residue aspartate 125 participates in substrate binding. An NAD(+)-binding site is contributed by serine 129. Aspartate 172 serves as a coordination point for substrate. Zn(2+) contacts are provided by aspartate 172 and histidine 252. Histidine 256 is a binding site for substrate. A Zn(2+)-binding site is contributed by histidine 268.

Belongs to the glycerol-1-phosphate dehydrogenase family. It depends on Zn(2+) as a cofactor.

The protein localises to the cytoplasm. The enzyme catalyses sn-glycerol 1-phosphate + NAD(+) = dihydroxyacetone phosphate + NADH + H(+). It catalyses the reaction sn-glycerol 1-phosphate + NADP(+) = dihydroxyacetone phosphate + NADPH + H(+). The protein operates within membrane lipid metabolism; glycerophospholipid metabolism. Functionally, catalyzes the NAD(P)H-dependent reduction of dihydroxyacetonephosphate (DHAP or glycerone phosphate) to glycerol 1-phosphate (G1P). The G1P thus generated is used as the glycerophosphate backbone of phospholipids in the cellular membranes of Archaea. The polypeptide is Glycerol-1-phosphate dehydrogenase [NAD(P)+] (Natronomonas pharaonis (strain ATCC 35678 / DSM 2160 / CIP 103997 / JCM 8858 / NBRC 14720 / NCIMB 2260 / Gabara) (Halobacterium pharaonis)).